A 595-amino-acid chain; its full sequence is Merlin (595 aa).

The residue at position 13 (Ser13) is a Phosphoserine. Residues 22 to 311 form the FERM domain; sequence FTVRIVTMDA…GNHDLFMRRR (290 aa). A Phosphoserine; by PAK modification is found at Ser518.

Interacts with NHERF1, HGS and AGAP2. Interacts with LAYN. Interacts with SGSM3. Interacts (via FERM domain) with MPP1. Interacts with WWC1. Interacts with the CUL4A-RBX1-DDB1-VprBP/DCAF1 E3 ubiquitin-protein ligase complex. The unphosphorylated form interacts (via FERM domain) with VPRBP/DCAF1. Interacts (via FERM domain) with NOP53; the interaction is direct. Interacts with SCHIP1; the interaction is direct. Phosphorylation of Ser-518 inhibits nuclear localization by disrupting the intramolecular association of the FERM domain with the C-terminal tail. The dephosphorylation of Ser-518 favors the interaction with NOP53. In terms of processing, ubiquitinated by the CUL4A-RBX1-DDB1-DCAF1/VprBP E3 ubiquitin-protein ligase complex for ubiquitination and subsequent proteasome-dependent degradation. As to expression, widely expressed. Isoform 1 and isoform 3 are predominant. Isoform 4, isoform 5 and isoform 6 are expressed moderately. Isoform 8 is found at low frequency. Isoform 7, isoform 9 and isoform 10 are not expressed in adult tissues, with the exception of adult retina expressing isoform 10. Isoform 9 is faintly expressed in fetal brain, heart, lung, skeletal muscle and spleen. Fetal thymus expresses isoforms 1, 7, 9 and 10 at similar levels.

The protein localises to the cell projection. The protein resides in the filopodium membrane. Its subcellular location is the ruffle membrane. It is found in the nucleus. It localises to the cytoplasm. The protein localises to the perinuclear region. The protein resides in the cytoplasmic granule. Its subcellular location is the cytoskeleton. In terms of biological role, probable regulator of the Hippo/SWH (Sav/Wts/Hpo) signaling pathway, a signaling pathway that plays a pivotal role in tumor suppression by restricting proliferation and promoting apoptosis. Along with WWC1 can synergistically induce the phosphorylation of LATS1 and LATS2 and can probably function in the regulation of the Hippo/SWH (Sav/Wts/Hpo) signaling pathway. May act as a membrane stabilizing protein. May inhibit PI3 kinase by binding to AGAP2 and impairing its stimulating activity. Suppresses cell proliferation and tumorigenesis by inhibiting the CUL4A-RBX1-DDB1-VprBP/DCAF1 E3 ubiquitin-protein ligase complex. The sequence is that of Merlin (NF2) from Homo sapiens (Human).